A 1828-amino-acid polypeptide reads, in one-letter code: AT-rich interactive domain-containing protein 2 (1828 aa).

At A2 the chain carries N-acetylalanine. The residue at position 4 (S4) is a Phosphoserine. Residues K7, K15, and K119 each participate in a glycyl lysine isopeptide (Lys-Gly) (interchain with G-Cter in SUMO2) cross-link. Positions 13–105 constitute an ARID domain; the sequence is RRKGLAFLDE…YLEKYEKVHH (93 aa). The LXXLL motif lies at 313 to 317; it reads LRFLL. A DNA-binding region (RFX-type winged-helix) is located at residues 524–603; sequence ACQWLNAHFE…IHVIGVKRRA (80 aa). A Glycyl lysine isopeptide (Lys-Gly) (interchain with G-Cter in SUMO2) cross-link involves residue K555. A phosphoserine mark is found at S631 and S635. T653 carries the phosphothreonine modification. Phosphoserine is present on S689. At T692 the chain carries Phosphothreonine. Disordered stretches follow at residues 824–843, 962–1028, 1245–1339, 1360–1462, 1483–1503, and 1566–1618; these read TSPQ…SQPQ, LTGQ…QVQV, KEAT…EPVD, KGDG…RPSV, HSGP…TNGT, and SAAQ…HADP. The span at 987–1011 shows a compositional bias: polar residues; the sequence is AMSSSSTLQSQGPPPTVSQMLSVKR. Over residues 1012–1028 the composition is skewed to low complexity; the sequence is QQQQQHSPAAPAQQVQV. Basic and acidic residues predominate over residues 1245–1259; that stretch reads KEATGLHVHERKIEV. A compositionally biased stretch (polar residues) spans 1267–1283; it reads RGTTNTSNGDTSESELQ. S1294 carries the post-translational modification Phosphoserine. Polar residues-rich tracts occupy residues 1295-1320 and 1366-1379; these read DSSL…SNGP and LSKN…SNHV. Phosphoserine is present on S1385. Composition is skewed to polar residues over residues 1390 to 1400 and 1419 to 1428; these read QGTSGATQQDT and GSPSTSSMQE. Positions 1453-1462 are enriched in low complexity; sequence SDVPQQRPSV. S1491 carries the post-translational modification Phosphoserine. 2 stretches are compositionally biased toward polar residues: residues 1491-1503 and 1567-1586; these read SALS…TNGT and AAQQ…APQN. Positions 1594–1614 are enriched in low complexity; that stretch reads AVQVQGQPSSSQPSPVSASSQ. The C2H2-type zinc finger occupies 1626–1651; it reads FMCLWQSCKKWFQTPSQVFYHAATEH. Glycyl lysine isopeptide (Lys-Gly) (interchain with G-Cter in SUMO2) cross-links involve residues K1695, K1710, and K1725. The disordered stretch occupies residues 1697 to 1726; that stretch reads DEPGQVANQKSSTKQPTVGGTGSAPRAQKA. Residues 1702–1714 show a composition bias toward polar residues; it reads VANQKSSTKQPTV.

The protein belongs to the RFX family. Component of the SWI/SNF-B (PBAF) chromatin remodeling complex, at least composed of SMARCA4/BRG1, SMARCB1/BAF47/SNF5, ACTL6A/BAF53A or ACTL6B/BAF53B, SMARCE1/BAF57, SMARCD1/BAF60A, SMARCD2/BAF60B, perhaps SMARCD3/BAF60C, SMARCC1/BAF155, SMARCC2/BAF170, PBRM1/BAF180, ARID2/BAF200 and actin. Interacts with SRF. Forms complexes with SRF and SRF cofactors MYOCD, NKX2-5 and SRFBP1. As to expression, highly expressed in testis, expressed in heart, liver and kidney.

The protein localises to the nucleus. Involved in transcriptional activation and repression of select genes by chromatin remodeling (alteration of DNA-nucleosome topology). Required for the stability of the SWI/SNF chromatin remodeling complex SWI/SNF-B (PBAF). May be involved in targeting the complex to different genes. May be involved in regulating transcriptional activation of cardiac genes. This chain is AT-rich interactive domain-containing protein 2, found in Mus musculus (Mouse).